Here is a 339-residue protein sequence, read N- to C-terminus: Anthranilate phosphoribosyltransferase (339 aa).

Residues G81, 84 to 85 (GD), T89, 91 to 94 (NIST), 109 to 117 (KHGNRSVSS), and S121 each bind 5-phospho-alpha-D-ribose 1-diphosphate. Residue G81 coordinates anthranilate. Residue S93 coordinates Mg(2+). Residue N112 participates in anthranilate binding. R165 serves as a coordination point for anthranilate. D224 and E225 together coordinate Mg(2+).

This sequence belongs to the anthranilate phosphoribosyltransferase family. As to quaternary structure, homodimer. Mg(2+) is required as a cofactor.

The enzyme catalyses N-(5-phospho-beta-D-ribosyl)anthranilate + diphosphate = 5-phospho-alpha-D-ribose 1-diphosphate + anthranilate. It participates in amino-acid biosynthesis; L-tryptophan biosynthesis; L-tryptophan from chorismate: step 2/5. Its function is as follows. Catalyzes the transfer of the phosphoribosyl group of 5-phosphorylribose-1-pyrophosphate (PRPP) to anthranilate to yield N-(5'-phosphoribosyl)-anthranilate (PRA). The chain is Anthranilate phosphoribosyltransferase from Thermosynechococcus vestitus (strain NIES-2133 / IAM M-273 / BP-1).